The following is a 468-amino-acid chain: ATP synthase subunit beta 2 (468 aa).

Residue Gly-155–Thr-162 coordinates ATP.

It belongs to the ATPase alpha/beta chains family. F-type ATPases have 2 components, CF(1) - the catalytic core - and CF(0) - the membrane proton channel. CF(1) has five subunits: alpha(3), beta(3), gamma(1), delta(1), epsilon(1). CF(0) has four main subunits: a(1), b(1), b'(1) and c(9-12).

It is found in the cell inner membrane. It catalyses the reaction ATP + H2O + 4 H(+)(in) = ADP + phosphate + 5 H(+)(out). Produces ATP from ADP in the presence of a proton gradient across the membrane. The catalytic sites are hosted primarily by the beta subunits. This chain is ATP synthase subunit beta 2, found in Chlorobium luteolum (strain DSM 273 / BCRC 81028 / 2530) (Pelodictyon luteolum).